The primary structure comprises 336 residues: Protein RecA (336 aa).

Gly-66–Thr-73 is a binding site for ATP.

It belongs to the RecA family.

The protein resides in the cytoplasm. Functionally, can catalyze the hydrolysis of ATP in the presence of single-stranded DNA, the ATP-dependent uptake of single-stranded DNA by duplex DNA, and the ATP-dependent hybridization of homologous single-stranded DNAs. It interacts with LexA causing its activation and leading to its autocatalytic cleavage. The polypeptide is Protein RecA (Mycoplasma pneumoniae (strain ATCC 29342 / M129 / Subtype 1) (Mycoplasmoides pneumoniae)).